A 366-amino-acid chain; its full sequence is C-X-C chemokine receptor type 3 (366 aa).

The Extracellular segment spans residues 1 to 55 (MVPEMSERQEFQASDFAYLLENSSYDYGENETYFCCTSPPCPQDFSLNFDRTFLP). Asn22 carries N-linked (GlcNAc...) asparagine glycosylation. Sulfotyrosine occurs at positions 25 and 27. Asn30 carries an N-linked (GlcNAc...) asparagine glycan. The chain crosses the membrane as a helical span at residues 56-76 (VLYSLLFVLGLLGNGIVAVVL). The Cytoplasmic portion of the chain corresponds to 77–88 (LSQRAALSSTDT). A helical membrane pass occupies residues 89-109 (FLLHLAVADALLVLTLPLWAV). The Extracellular portion of the chain corresponds to 110–124 (DAAIQWVFGSGLCKV). Residues Cys122 and Cys201 are joined by a disulfide bond. The chain crosses the membrane as a helical span at residues 125–145 (AGALFNINFYAGALLLACISF). At 146–167 (DRYLSIVHATQLYRRGPPTRVA) the chain is on the cytoplasmic side. Residues 168–188 (LTCVAVWGLCLLFALPDFIFL) traverse the membrane as a helical segment. Residues 189 to 221 (SSHHDNRLNATHCQYNFPQEGHTALRILQLVAG) lie on the Extracellular side of the membrane. An N-linked (GlcNAc...) asparagine glycan is attached at Asn197. The chain crosses the membrane as a helical span at residues 222-242 (FLLPLLVMAYCYARILAVLLV). The Cytoplasmic segment spans residues 243–254 (SRGQRRLRAMRL). Residues 255–275 (VVVVVVAFALCWTPYHLVVLV) traverse the membrane as a helical segment. Residues 276–299 (DTLMDLGALARNCGRESSVDIAKS) are Extracellular-facing. A helical transmembrane segment spans residues 300–320 (VTSGMGYMHCCLNPLLYAFVG). The Cytoplasmic segment spans residues 321–366 (VKFRERMWVLLVRLGCPDQRCHQRQPSASRRESSWSETTEASYSGL). Residues 341 to 366 (CHQRQPSASRRESSWSETTEASYSGL) are disordered. Low complexity predominate over residues 355-366 (WSETTEASYSGL).

This sequence belongs to the G-protein coupled receptor 1 family. As to quaternary structure, homomer. Forms heteromers with ACKR4. Interacts with PF4/CXCL4. In terms of processing, sulfation on Tyr-25 and Tyr-27 is essential for CXCL10 binding. N-glycosylated.

The protein resides in the cell membrane. Its function is as follows. Receptor for the C-X-C chemokine CXCL9, CXCL10 and CXCL11 and mediates the proliferation, survival and angiogenic activity of mesangial cells through a heterotrimeric G-protein signaling pathway. Probably promotes cell chemotaxis response. Binds to CCL21. Upon activation by PF4, induces activated T-lymphocytes migration mediated via downstream Ras/extracellular signal-regulated kinase (ERK) signaling. This chain is C-X-C chemokine receptor type 3 (CXCR3), found in Bos taurus (Bovine).